We begin with the raw amino-acid sequence, 137 residues long: Large ribosomal subunit protein uL16 (137 aa).

The protein belongs to the universal ribosomal protein uL16 family. In terms of assembly, part of the 50S ribosomal subunit.

In terms of biological role, binds 23S rRNA and is also seen to make contacts with the A and possibly P site tRNAs. This Rhodopseudomonas palustris (strain BisB5) protein is Large ribosomal subunit protein uL16.